The following is a 653-amino-acid chain: Chaperone protein DnaK (653 aa).

T200 bears the Phosphothreonine; by autocatalysis mark. Positions 615–653 are disordered; it reads AEAAAAGAAGAGGAGASAGGASQQQDDVVDAEFKEVKKD. Gly residues predominate over residues 623 to 632; sequence AGAGGAGASA.

This sequence belongs to the heat shock protein 70 family.

Acts as a chaperone. This Paraburkholderia xenovorans (strain LB400) protein is Chaperone protein DnaK.